We begin with the raw amino-acid sequence, 137 residues long: SPbeta prophage-derived disulfide bond formation protein A (137 aa).

Positions 1-25 (MKKWIVLFLVLIAAAISIFVYVSTG) are cleaved as a signal peptide. In terms of domain architecture, Thioredoxin spans 26–136 (SEKPFYNDIN…IEKFFDKNGD (111 aa)). C58 and C61 are oxidised to a cystine.

The protein belongs to the thioredoxin family.

Its subcellular location is the secreted. Unknown; dispensable for production of the lantibiotic sublancin 168 and for competence for DNA uptake. The polypeptide is SPbeta prophage-derived disulfide bond formation protein A (bdbA) (Bacillus subtilis (strain 168)).